A 661-amino-acid polypeptide reads, in one-letter code: Putative K(+) efflux antiporter KefB (661 aa).

A run of 11 helical transmembrane segments spans residues Gly5 to Gln25, Ala31 to Ile51, Glu53 to Leu73, Leu100 to Gly120, Val154 to Met174, Ile178 to Leu198, Val224 to Phe244, Leu273 to Ile293, Ile296 to Val316, Gly330 to Gly350, and Ile360 to Leu380. In terms of domain architecture, RCK N-terminal spans Gln410 to Pro527. Positions Arg571 to His656 constitute an RCK C-terminal domain.

Belongs to the monovalent cation:proton antiporter 2 (CPA2) transporter (TC 2.A.37) family. KEA (TC 2.A.37.1) subfamily.

Its subcellular location is the cell membrane. Its function is as follows. May operate as a K(+)/H(+) antiporter. The sequence is that of Putative K(+) efflux antiporter KefB (kefB) from Alkalimonas amylolytica.